The chain runs to 611 residues: Probable cysteine desulfurase 1 (611 aa).

Residues 1 to 208 form a cargo-loading domain region; sequence MRATQLYAAS…HEMVDVFDIQ (208 aa). An N6-(pyridoxal phosphate)lysine modification is found at Lys428. Cys566 serves as the catalytic Cysteine persulfide intermediate.

The protein belongs to the class-V pyridoxal-phosphate-dependent aminotransferase family. Csd subfamily. As to quaternary structure, there are 1-2 copies of this protein in each type 2A encapsulin shell. The cofactor is pyridoxal 5'-phosphate.

It is found in the encapsulin nanocompartment. It catalyses the reaction (sulfur carrier)-H + L-cysteine = (sulfur carrier)-SH + L-alanine. In terms of biological role, cargo protein of a type 2A encapsulin nanocompartment involved in sulfur metabolism. Cysteine desulfurases mobilize the sulfur from L-cysteine to yield L-alanine, an essential step in sulfur metabolism for biosynthesis of a variety of sulfur-containing biomolecules. The polypeptide is Probable cysteine desulfurase 1 (Mycobacterium leprae (strain TN)).